A 259-amino-acid polypeptide reads, in one-letter code: DNA-directed RNA polymerase 30 kDa polypeptide (259 aa).

Residues 155–195 form a TFIIS-type zinc finger; that stretch reads YNTPCPNCKSRNTTPMMIQTRAADEPPLVRHACRDCKQHFK. Zn(2+) contacts are provided by cysteine 159, cysteine 162, cysteine 187, and cysteine 190. Residues 220–259 are disordered; it reads EILPDNNPSPPESPEPASPIDDGLIRATFDRNDEPPEDDE. Pro residues predominate over residues 226-236; that stretch reads NPSPPESPEPA.

Belongs to the poxviridae DNA-directed RNA polymerase 30 kDa subunit family. The DNA-dependent RNA polymerase (vRNAP) consists of eight subunits encoded by early viral genes and termed according to their apparent molecular masses Rpo147, Rpo132, Rpo35, Rpo30, Rpo22, Rpo19, Rpo18, and Rpo7. The same holoenzyme, with the addition of the transcription-specificity factor RAP94, is used for early gene expression.

The protein localises to the virion. It localises to the host cytoplasm. It carries out the reaction RNA(n) + a ribonucleoside 5'-triphosphate = RNA(n+1) + diphosphate. In terms of biological role, part of the DNA-dependent RNA polymerase which catalyzes the transcription of viral DNA into RNA using the four ribonucleoside triphosphates as substrates. Responsible for the transcription of early, intermediate and late genes. DNA-dependent RNA polymerase associates with the early transcription factor (ETF), itself composed of OPG118 and OPG134, thereby allowing the early genes transcription. Late transcription, and probably also intermediate transcription, require newly synthesized RNA polymerase. In Homo sapiens (Human), this protein is DNA-directed RNA polymerase 30 kDa polypeptide (OPG066).